Here is a 319-residue protein sequence, read N- to C-terminus: L-lactate dehydrogenase (319 aa).

Residues Val17, Asp38, Lys43, Tyr69, and 83–84 (GA) contribute to the NAD(+) site. Substrate-binding positions include Gln86, Arg92, and 124–127 (NPVD). Residues 122–124 (ATN) and Ser147 each bind NAD(+). Residue 152 to 155 (DTAR) coordinates substrate. Beta-D-fructose 1,6-bisphosphate is bound by residues Arg157 and His172. His179 acts as the Proton acceptor in catalysis. Tyr224 is subject to Phosphotyrosine. A substrate-binding site is contributed by Thr233.

Belongs to the LDH/MDH superfamily. LDH family. Homotetramer.

Its subcellular location is the cytoplasm. The enzyme catalyses (S)-lactate + NAD(+) = pyruvate + NADH + H(+). It functions in the pathway fermentation; pyruvate fermentation to lactate; (S)-lactate from pyruvate: step 1/1. Its activity is regulated as follows. Allosterically activated by fructose 1,6-bisphosphate (FBP). Its function is as follows. Catalyzes the conversion of lactate to pyruvate. In Bacillus licheniformis (strain ATCC 14580 / DSM 13 / JCM 2505 / CCUG 7422 / NBRC 12200 / NCIMB 9375 / NCTC 10341 / NRRL NRS-1264 / Gibson 46), this protein is L-lactate dehydrogenase.